Consider the following 169-residue polypeptide: Disulfide bond formation protein B (169 aa).

Over methionine 1–alanine 14 the chain is Cytoplasmic. A helical membrane pass occupies residues tryptophan 15–tyrosine 31. Over phenylalanine 32 to valine 49 the chain is Periplasmic. Cysteine 41 and cysteine 44 form a disulfide bridge. The helical transmembrane segment at alanine 50–proline 65 threads the bilayer. Residues lysine 66–tryptophan 71 lie on the Cytoplasmic side of the membrane. The chain crosses the membrane as a helical span at residues leucine 72 to tryptophan 89. Over glutamine 90–glutamine 144 the chain is Periplasmic. A disulfide bond links cysteine 104 and cysteine 130. Residues tryptophan 145 to serine 163 traverse the membrane as a helical segment. At glutamine 164–lysine 169 the chain is on the cytoplasmic side.

The protein belongs to the DsbB family.

The protein resides in the cell inner membrane. Required for disulfide bond formation in some periplasmic proteins. Acts by oxidizing the DsbA protein. In Photorhabdus laumondii subsp. laumondii (strain DSM 15139 / CIP 105565 / TT01) (Photorhabdus luminescens subsp. laumondii), this protein is Disulfide bond formation protein B.